A 255-amino-acid polypeptide reads, in one-letter code: MAVISMKQLLEAGVHFGHQTRRWNPKMAKYIFTERNGIHVIDLQQTVKMVDTAYEFVREAAANDAVILFVGTKKQAAEAVAEEATRAGQYYINHRWLGGTLTNWNTIKKRIARLKEIKQMEADGTFEVLPKKEVALLNKQRARLEKFLGGIEDMPRIPDVIYIVDPHKEQIAVKEAKKLGIPVVAMVDTNADPDEIDVIIPANDDAIRAVKLITSKMADAIIEGKQGEDASVDFQEAAAADSIEEIVEVVEGDNN.

The protein belongs to the universal ribosomal protein uS2 family.

This chain is Small ribosomal subunit protein uS2, found in Streptococcus thermophilus (strain ATCC BAA-491 / LMD-9).